We begin with the raw amino-acid sequence, 121 residues long: Peptidyl-tRNA hydrolase (121 aa).

Belongs to the PTH2 family.

It localises to the cytoplasm. The catalysed reaction is an N-acyl-L-alpha-aminoacyl-tRNA + H2O = an N-acyl-L-amino acid + a tRNA + H(+). The natural substrate for this enzyme may be peptidyl-tRNAs which drop off the ribosome during protein synthesis. This chain is Peptidyl-tRNA hydrolase, found in Staphylothermus marinus (strain ATCC 43588 / DSM 3639 / JCM 9404 / F1).